An 805-amino-acid chain; its full sequence is 1,4-alpha-glucan-branching enzyme 2-2, chloroplastic/amyloplastic (805 aa).

The transit peptide at 1–32 (MVVIHGVSLTPRFTLPSRPLNTGFNAGNSTLS) directs the protein to the chloroplast. Residue aspartate 451 is the Nucleophile of the active site. Glutamate 506 serves as the catalytic Proton donor.

Belongs to the glycosyl hydrolase 13 family. GlgB subfamily. In terms of assembly, monomer. In terms of tissue distribution, expressed in seedlings, roots, stems, leaves, inflorescences, seeds and flowers.

Its subcellular location is the plastid. The protein resides in the chloroplast stroma. It localises to the amyloplast. It catalyses the reaction Transfers a segment of a (1-&gt;4)-alpha-D-glucan chain to a primary hydroxy group in a similar glucan chain.. It functions in the pathway glycan biosynthesis; starch biosynthesis. Its function is as follows. Catalyzes the formation of the alpha-1,6-glucosidic linkages in starch by scission of a 1,4-alpha-linked oligosaccharide from growing alpha-1,4-glucan chains and the subsequent attachment of the oligosaccharide to the alpha-1,6 position. This chain is 1,4-alpha-glucan-branching enzyme 2-2, chloroplastic/amyloplastic (SBE2.2), found in Arabidopsis thaliana (Mouse-ear cress).